The sequence spans 292 residues: Cytidine deaminase (292 aa).

CMP/dCMP-type deaminase domains lie at Thr47–Lys167 and Asp186–Leu292. Residue Asn88–Glu90 coordinates substrate. His101 is a binding site for Zn(2+). The active-site Proton donor is Glu103. Zn(2+)-binding residues include Cys128 and Cys131.

The protein belongs to the cytidine and deoxycytidylate deaminase family. As to quaternary structure, homodimer. Zn(2+) serves as cofactor.

It carries out the reaction cytidine + H2O + H(+) = uridine + NH4(+). The enzyme catalyses 2'-deoxycytidine + H2O + H(+) = 2'-deoxyuridine + NH4(+). Functionally, this enzyme scavenges exogenous and endogenous cytidine and 2'-deoxycytidine for UMP synthesis. The protein is Cytidine deaminase of Haemophilus influenzae (strain PittEE).